The chain runs to 445 residues: Probable glycine dehydrogenase (decarboxylating) subunit 1 (445 aa).

It belongs to the GcvP family. N-terminal subunit subfamily. In terms of assembly, the glycine cleavage system is composed of four proteins: P, T, L and H. In this organism, the P 'protein' is a heterodimer of two subunits.

It carries out the reaction N(6)-[(R)-lipoyl]-L-lysyl-[glycine-cleavage complex H protein] + glycine + H(+) = N(6)-[(R)-S(8)-aminomethyldihydrolipoyl]-L-lysyl-[glycine-cleavage complex H protein] + CO2. In terms of biological role, the glycine cleavage system catalyzes the degradation of glycine. The P protein binds the alpha-amino group of glycine through its pyridoxal phosphate cofactor; CO(2) is released and the remaining methylamine moiety is then transferred to the lipoamide cofactor of the H protein. This is Probable glycine dehydrogenase (decarboxylating) subunit 1 from Anaeromyxobacter sp. (strain Fw109-5).